A 168-amino-acid chain; its full sequence is G/U mismatch-specific DNA glycosylase (168 aa).

It belongs to the uracil-DNA glycosylase (UDG) superfamily. TDG/mug family. As to quaternary structure, binds DNA as a monomer.

Its subcellular location is the cytoplasm. It carries out the reaction Specifically hydrolyzes mismatched double-stranded DNA and polynucleotides, releasing free uracil.. In terms of biological role, excises ethenocytosine and uracil, which can arise by alkylation or deamination of cytosine, respectively, from the corresponding mispairs with guanine in ds-DNA. It is capable of hydrolyzing the carbon-nitrogen bond between the sugar-phosphate backbone of the DNA and the mispaired base. The complementary strand guanine functions in substrate recognition. Required for DNA damage lesion repair in stationary-phase cells. This Escherichia fergusonii (strain ATCC 35469 / DSM 13698 / CCUG 18766 / IAM 14443 / JCM 21226 / LMG 7866 / NBRC 102419 / NCTC 12128 / CDC 0568-73) protein is G/U mismatch-specific DNA glycosylase.